Reading from the N-terminus, the 161-residue chain is Ribosome maturation factor RimP (161 aa).

Belongs to the RimP family.

It localises to the cytoplasm. Required for maturation of 30S ribosomal subunits. This chain is Ribosome maturation factor RimP, found in Janthinobacterium sp. (strain Marseille) (Minibacterium massiliensis).